Consider the following 206-residue polypeptide: MSLLKNLLAPCLALLLAGCAALGPHESVEGPGNTAAWKEHRSHVATLDGWQISGKIGIRAPQESGSGTLFWLQRQDYFDIRLSGPLGRGATRLTGRPDAVSLEVAGQGRFEAESPEALVEAQLGWQLPVSHLLWWVRGLPAPDSRSRLSIDSESRLARLEQDGWQVEYLAYAEHNGFVLPERIRLQGHDLQITLVIKDWQPRQLGR.

An N-terminal signal peptide occupies residues 1 to 18; the sequence is MSLLKNLLAPCLALLLAG. A lipid anchor (N-palmitoyl cysteine) is attached at Cys-19. Residue Cys-19 is the site of S-diacylglycerol cysteine attachment.

This sequence belongs to the LolB family. As to quaternary structure, monomer.

Its subcellular location is the cell outer membrane. Plays a critical role in the incorporation of lipoproteins in the outer membrane after they are released by the LolA protein. This is Outer-membrane lipoprotein LolB from Stutzerimonas stutzeri (strain A1501) (Pseudomonas stutzeri).